A 190-amino-acid polypeptide reads, in one-letter code: Potassium-transporting ATPase KdpC subunit (190 aa).

A helical transmembrane segment spans residues 10–30 (TFIFLLLITGGVYPLLTTVLG).

Belongs to the KdpC family. In terms of assembly, the system is composed of three essential subunits: KdpA, KdpB and KdpC.

It is found in the cell inner membrane. In terms of biological role, part of the high-affinity ATP-driven potassium transport (or Kdp) system, which catalyzes the hydrolysis of ATP coupled with the electrogenic transport of potassium into the cytoplasm. This subunit acts as a catalytic chaperone that increases the ATP-binding affinity of the ATP-hydrolyzing subunit KdpB by the formation of a transient KdpB/KdpC/ATP ternary complex. The polypeptide is Potassium-transporting ATPase KdpC subunit (Escherichia coli (strain SE11)).